The chain runs to 217 residues: Proteasome subunit beta type-9 (217 aa).

Residues 1–18 (MLEESSEPGWLSEEVKTG) constitute a propeptide, removed in mature form. The Nucleophile role is filled by Thr19.

It belongs to the peptidase T1B family. The 26S proteasome consists of a 20S proteasome core and two 19S regulatory subunits. The 20S proteasome core is composed of 28 subunits that are arranged in four stacked rings, resulting in a barrel-shaped structure. The two end rings are each formed by seven alpha subunits, and the two central rings are each formed by seven beta subunits. The catalytic chamber with the active sites is on the inside of the barrel. Component of the immunoproteasome, where it displaces the equivalent housekeeping subunit PSMB6. Post-translationally, autocleaved. The resulting N-terminal Thr residue of the mature subunit is responsible for the nucleophile proteolytic activity.

The protein localises to the cytoplasm. The protein resides in the nucleus. The enzyme catalyses Cleavage of peptide bonds with very broad specificity.. In terms of biological role, the proteasome is a multicatalytic proteinase complex which is characterized by its ability to cleave peptides with Arg, Phe, Tyr, Leu, and Glu adjacent to the leaving group at neutral or slightly basic pH. The proteasome has an ATP-dependent proteolytic activity. This subunit is involved in antigen processing to generate class I binding peptides. The protein is Proteasome subunit beta type-9 (psmb9-a) of Salmo salar (Atlantic salmon).